A 334-amino-acid polypeptide reads, in one-letter code: MRVLASAPAKIILFGEHSVVYGKPAIAAAIDLRTYVWAEFNNKGAIKIEAKDIKVPGLTVSFSEDEIYFESDYGKAAEVLSYVRQAIELVREEADKNGNGVTVSITSQIPVGAGLGSSAAVAVATIGAVSRLLGLELSNEEIAKLGHKVELLVQGASSGIDPTVSAIGGFLHYEKGNFEHLPFMELPIVVGYTGSSGSTKELVAMVRRNYEEMPEVIEPILVSMGKIVEKAKDVLLSELDNEVRFVQLGRLMNINHGLLDALGVSTKKLSELVYAARTAGALGAKITGAGGGGCMYALAPEKQSEVATAITIAGGTPMITKISDEGLRIEEVLP.

Proline 110–alanine 120 provides a ligand contact to ATP. Aspartate 161 functions as the Proton acceptor in the catalytic mechanism.

This sequence belongs to the GHMP kinase family. Mevalonate kinase subfamily. As to quaternary structure, homodimer. Requires Mg(2+) as cofactor.

Its subcellular location is the cytoplasm. The catalysed reaction is (R)-mevalonate + ATP = (R)-5-phosphomevalonate + ADP + H(+). The protein operates within isoprenoid biosynthesis; isopentenyl diphosphate biosynthesis via mevalonate pathway; isopentenyl diphosphate from (R)-mevalonate: step 1/3. Functionally, catalyzes the phosphorylation of (R)-mevalonate (MVA) to (R)-mevalonate 5-phosphate (MVAP). Functions in the mevalonate (MVA) pathway leading to isopentenyl diphosphate (IPP), a key precursor for the biosynthesis of isoprenoid compounds such as archaeal membrane lipids. This Thermococcus onnurineus (strain NA1) protein is Mevalonate kinase.